Reading from the N-terminus, the 1188-residue chain is Phospholipid-transporting ATPase IB (1188 aa).

Over 1–94 (MLNGAGLDKA…PRFLYEQIRR (94 aa)) the chain is Cytoplasmic. Thr-45 carries the phosphothreonine modification. The helical transmembrane segment at 95–115 (AANAFFLFIALLQQIPDVSPT) threads the bilayer. Over 116 to 119 (GRYT) the chain is Extracellular. A helical transmembrane segment spans residues 120 to 140 (TLVPLIIILTIAGIKEIVEDF). Residues 141–316 (KRHKADNAVN…SNVEKVTNVQ (176 aa)) are Cytoplasmic-facing. The chain crosses the membrane as a helical span at residues 317–337 (ILVLFGILLVMALVSSAGALY). The Extracellular portion of the chain corresponds to 338-364 (WNRSHGEKNWYIKKMDTTSDNFGYNLL). Residues 365–385 (TFIILYNNLIPISLLVTLEVV) traverse the membrane as a helical segment. The Cytoplasmic segment spans residues 386–887 (KYTQALFINW…CILYCFYKNV (502 aa)). Asp-428 functions as the 4-aspartylphosphate intermediate in the catalytic mechanism. 12 residues coordinate ATP: Asp-428, Lys-429, Thr-430, Glu-528, Phe-569, Lys-592, Arg-625, Thr-705, Gly-706, Asp-707, Arg-795, and Lys-801. Residue Asp-428 coordinates Mg(2+). Mg(2+) is bound at residue Thr-430. A Mg(2+)-binding site is contributed by Asp-821. Positions 824 and 825 each coordinate ATP. Asp-825 contacts Mg(2+). Residues 888 to 908 (VLYIIELWFAFVNGFSGQILF) traverse the membrane as a helical segment. Residues 909-910 (ER) are Extracellular-facing. Residues 911–931 (WCIGLYNVIFTALPPFTLGIF) form a helical membrane-spanning segment. At 932–959 (ERSCTQESMLRFPQLYKITQNGEGFNTK) the chain is on the cytoplasmic side. The helical transmembrane segment at 960 to 980 (VFWGHCINALVHSLILFWFPM) threads the bilayer. The Extracellular segment spans residues 981–997 (KALEHDTVLTSGHATDY). The chain crosses the membrane as a helical span at residues 998–1018 (LFVGNIVYTYVVVTVCLKAGL). Topologically, residues 1019-1028 (ETTAWTKFSH) are cytoplasmic. The helical transmembrane segment at 1029 to 1049 (LAVWGSMLTWLVFFGIYSTIW) threads the bilayer. At 1050–1063 (PTIPIAPDMRGQAT) the chain is on the extracellular side. The chain crosses the membrane as a helical span at residues 1064 to 1084 (MVLSSAHFWLGLFLVPTACLI). The Cytoplasmic portion of the chain corresponds to 1085 to 1188 (EDVAWRAAKH…DTTKKKSRKK (104 aa)). A disordered region spans residues 1162 to 1188 (SQEEHGAVSQEEVIRAYDTTKKKSRKK). Over residues 1163–1182 (QEEHGAVSQEEVIRAYDTTK) the composition is skewed to basic and acidic residues.

This sequence belongs to the cation transport ATPase (P-type) (TC 3.A.3) family. Type IV subfamily. In terms of assembly, component of a P4-ATPase flippase complex which consists of a catalytic alpha subunit and an accessory beta subunit. Interacts with TMEM30A to form a flippase complex. Mg(2+) serves as cofactor. Strongly expressed in the brain, cerebellum, retina and testis.

It localises to the membrane. It is found in the golgi apparatus membrane. The protein localises to the endosome membrane. Its subcellular location is the cell membrane. The protein resides in the photoreceptor outer segment membrane. It localises to the photoreceptor inner segment membrane. The enzyme catalyses ATP + H2O + phospholipidSide 1 = ADP + phosphate + phospholipidSide 2.. The catalysed reaction is a 1,2-diacyl-sn-glycero-3-phospho-L-serine(out) + ATP + H2O = a 1,2-diacyl-sn-glycero-3-phospho-L-serine(in) + ADP + phosphate + H(+). It catalyses the reaction a 1,2-diacyl-sn-glycero-3-phosphoethanolamine(in) + ATP + H2O = a 1,2-diacyl-sn-glycero-3-phosphoethanolamine(out) + ADP + phosphate + H(+). In terms of biological role, catalytic component of a P4-ATPase flippase complex which catalyzes the hydrolysis of ATP coupled to the transport of aminophospholipids from the outer to the inner leaflet of various membranes and ensures the maintenance of asymmetric distribution of phospholipids. Able to translocate phosphatidylserine, but not phosphatidylcholine. Phospholipid translocation also seems to be implicated in vesicle formation and in uptake of lipid signaling molecules. Reconstituted to liposomes, the ATP8A2:TMEM30A flippase complex predominantly transports phosphatidylserine (PS) and to a lesser extent phosphatidylethanolamine (PE). Phospholipid translocation is not associated with a countertransport of an inorganic ion or other charged substrate from the cytoplasmic side toward the exoplasm in connection with the phosphorylation from ATP. ATP8A2:TMEM30A may be involved in regulation of neurite outgrowth. Proposed to function in the generation and maintenance of phospholipid asymmetry in photoreceptor disk membranes and neuronal axon membranes. May be involved in vesicle trafficking in neuronal cells. Required for normal visual and auditory function; involved in photoreceptor and inner ear spiral ganglion cell survival. In Homo sapiens (Human), this protein is Phospholipid-transporting ATPase IB.